The following is a 245-amino-acid chain: Lactate utilization protein A (245 aa).

The protein belongs to the LutA/YkgE family.

Its function is as follows. Is involved in L-lactate degradation and allows cells to grow with lactate as the sole carbon source. This is Lactate utilization protein A from Exiguobacterium sp. (strain ATCC BAA-1283 / AT1b).